The chain runs to 695 residues: MRLAAGALLACAALGLCLAVTEKTVRWCAVNDHEASKCANFRDSMKKVLPEDGPRIICVKKASYLDCIKAIAAHEADAVTLDAGLVHEAGLTPNNLKPVVAEFYGSKENPKTFYYAVALVKKGSNFQLNELQGKKSCHTGLGRSAGWNIPIGLLYCDLPEPRKPLEKAVASFFSGSCVPCADGADFPQLCQLCPGCGCSSVQPYFGYSGAFKCLKDGLGDVAFVKQETIFENLPSKDERDQYELLCLDNTRKPVDEYEQCHLARVPSHAVVARSVDGKEDLIWELLNQAQEHFGKDKSGDFQLFSSPHGKNLLFKDSAYGFFKVPPRMDANLYLGYEYVTAVRNLREGICPDPLQDECKAVKWCALSHHERLKCDEWSVTSGGLIECESAETPEDCIAKIMNGEADAMSLDGGYVYIAGQCGLVPVLAENYESTDCKKAPEEGYLSVAVVKKSNPDINWNNLEGKKSCHTAVDRTAGWNIPMGLLYNRINHCRFDEFFRQGCAPGSQKNSSLCELCVGPSVCAPNNREGYYGYTGAFRCLVEKGDVAFVKSQTVLQNTGGRNSEPWAKDLKEEDFELLCLDGTRKPVSEAHNCHLAKAPNHAVVSRKDKAACVKQKLLDLQVEYGNTVADCSSKFCMFHSKTKDLLFRDDTKCLVDLRGKNTYEKYLGADYIKAVSNLRKCSTSRLLEACTFHKH.

An N-terminal signal peptide occupies residues 1–19 (MRLAAGALLACAALGLCLA). Transferrin-like domains are found at residues 25–347 (VRWC…NLRE) and 361–680 (VKWC…NLRK). Disulfide bonds link C28-C67 and C38-C58. Residue R42 is modified to Dimethylated arginine. Fe(3+) contacts are provided by D82 and Y114. 17 disulfide bridges follow: C137–C213, C156–C350, C177–C193, C180–C196, C190–C198, C246–C260, C358–C612, C364–C396, C374–C387, C421–C690, C436–C653, C468–C539, C492–C681, C502–C516, C513–C522, C579–C593, and C631–C636. Hydrogencarbonate is bound by residues T139, R143, A145, and G146. Y207 serves as a coordination point for Fe(3+). H268 contacts Fe(3+). S389 is subject to Phosphoserine. Fe(3+)-binding residues include D411 and Y444. Positions 470, 474, 476, and 477 each coordinate hydrogencarbonate. N509 carries N-linked (GlcNAc...) asparagine glycosylation. Y533 is a binding site for Fe(3+). Fe(3+) is bound at residue H601. S682 bears the Phosphoserine mark.

Belongs to the transferrin family. In terms of assembly, monomer. Part of a complex composed of SLC40A1/ferroportin, TF/transferrin and HEPH/hephaestin that transfers iron from cells to transferrin. In terms of tissue distribution, expressed by the liver and secreted in plasma.

Its subcellular location is the secreted. In terms of biological role, transferrins are iron binding transport proteins which can bind two Fe(3+) ions in association with the binding of an anion, usually bicarbonate. It is responsible for the transport of iron from sites of absorption and heme degradation to those of storage and utilization. Serum transferrin may also have a further role in stimulating cell proliferation. In Oryctolagus cuniculus (Rabbit), this protein is Serotransferrin (TF).